We begin with the raw amino-acid sequence, 221 residues long: MELLIHQLLSKEESKKITSNITKDNSCWIDGKTSAGSYAAKVKNNLQLKKDSEVGVTNSNKVNNKLTSDQLIKSFALPRKVHGTMFTRSSVGQGYGMHVDNAYMSSGRSDLSFTIFLSSPNEYQGGELLIQSMQGVKEIKLNCGQIVIYPSTSLHSVKQVSQGERIVCVGWIQSYVANNEDRNFLFGLDAGARGLLAKHGRSDELDLVFQAYSNLLRRLGD.

The 95-residue stretch at Lys-80–Ser-174 folds into the Fe2OG dioxygenase domain. Positions 98, 100, and 155 each coordinate Fe cation. Arg-165 contributes to the 2-oxoglutarate binding site.

It depends on Fe(2+) as a cofactor. Requires L-ascorbate as cofactor.

This is PKHD-type hydroxylase P9211_12561 from Prochlorococcus marinus (strain MIT 9211).